The primary structure comprises 463 residues: Na(+)/H(+) antiporter NhaA 3 (463 aa).

11 helical membrane-spanning segments follow: residues 28-48 (FLATEAGGAVLLLLAAVAALL), 79-99 (LHHWVNDGAMAIFFAVVGLEI), 114-134 (IAVPALGAIGGLILPAAIYFV), 144-164 (GWGIPMSTDTAFVIGILALFG), 173-193 (LFLLTLAIVDDIGAITVVGIF), 196-216 (DHLNPVGLAVAGATVLAILGL), 232-252 (LVLWGAIHVSGVHATLAGVLV), 305-325 (VLHPISAFVVVPVFGLANAGV), 344-364 (VAAALIAGNACGISVAGVAAI), 377-397 (YGHLLGAATLAGIGFTISLFI), and 413-433 (IGILAGSLVAALAGTVILRVL). Residues 444–463 (TDEPVPRLPPRPWRAPVPAK) form a disordered region. Residues 449 to 463 (PRLPPRPWRAPVPAK) are compositionally biased toward pro residues.

Belongs to the NhaA Na(+)/H(+) (TC 2.A.33) antiporter family.

The protein localises to the cell membrane. The catalysed reaction is Na(+)(in) + 2 H(+)(out) = Na(+)(out) + 2 H(+)(in). In terms of biological role, na(+)/H(+) antiporter that extrudes sodium in exchange for external protons. This is Na(+)/H(+) antiporter NhaA 3 from Frankia alni (strain DSM 45986 / CECT 9034 / ACN14a).